A 94-amino-acid chain; its full sequence is Large ribosomal subunit protein bL25 (94 aa).

It belongs to the bacterial ribosomal protein bL25 family. In terms of assembly, part of the 50S ribosomal subunit; part of the 5S rRNA/L5/L18/L25 subcomplex. Contacts the 5S rRNA. Binds to the 5S rRNA independently of L5 and L18.

This is one of the proteins that binds to the 5S RNA in the ribosome where it forms part of the central protuberance. This Salmonella arizonae (strain ATCC BAA-731 / CDC346-86 / RSK2980) protein is Large ribosomal subunit protein bL25.